Here is a 502-residue protein sequence, read N- to C-terminus: Cytochrome P450 3A40 (502 aa).

Position 443 (Cys443) interacts with heme.

It belongs to the cytochrome P450 family. Heme serves as cofactor.

The protein localises to the endoplasmic reticulum membrane. Its subcellular location is the microsome membrane. It carries out the reaction an organic molecule + reduced [NADPH--hemoprotein reductase] + O2 = an alcohol + oxidized [NADPH--hemoprotein reductase] + H2O + H(+). In Oryzias latipes (Japanese rice fish), this protein is Cytochrome P450 3A40 (cyp3a40).